The chain runs to 472 residues: GTPase HflX (472 aa).

Residues M1–A21 form a disordered region. A Hflx-type G domain is found at P230–S396. Residues G236 to S243, F261 to D265, D283 to G286, N349 to D352, and S374 to K376 each bind GTP. The Mg(2+) site is built by S243 and T263.

It belongs to the TRAFAC class OBG-HflX-like GTPase superfamily. HflX GTPase family. In terms of assembly, monomer. Associates with the 50S ribosomal subunit. Requires Mg(2+) as cofactor.

Its subcellular location is the cytoplasm. Functionally, GTPase that associates with the 50S ribosomal subunit and may have a role during protein synthesis or ribosome biogenesis. Specific for GTP. This is GTPase HflX from Chlamydia pneumoniae (Chlamydophila pneumoniae).